A 51-amino-acid polypeptide reads, in one-letter code: Large ribosomal subunit protein eL39 (51 aa).

It belongs to the eukaryotic ribosomal protein eL39 family.

The chain is Large ribosomal subunit protein eL39 from Methanobrevibacter smithii (strain ATCC 35061 / DSM 861 / OCM 144 / PS).